We begin with the raw amino-acid sequence, 968 residues long: MKRMLINATQQEELRVALVDGQRLYDLDIESSRSEQKKSNIYKGKITRIEPSLEAVFIDYGMEKHGFLPLKEISKNYFPENYNCDVRLNIKDILREGQELIVQINKEERGTKGAALTTFITLAGSYLVLMPNNPKIAGISRRVEGSDRIELKELLSSLKIPEKMGLIIRTAGVGKSIKSLQWDLSLRLKHWNAIKKASKKKSAPFLIYQESNVIVRAFRDYLRQDIGEILIDNPKILDIAREHITALGRPDFINKIKLYTGEIPLFSYYQIESQIDSAFQRKVRLPSGGSIMVDTTEALTAIDINSSRSTRGADIETTAFNTNLEAVEEISRQLRLRDLGGLIVIDFIDMTTISHQKIIENKLREIVREDRARIQIGHISKFGLLEMSRQRLSSSLGESSHHICPRCTGTGTIRDNESLSLSILRLIEEEALKENTYEVHAIVPIEIACYLLNEKREAVYAIEKRQAGGKTIIVPNKNMKTPHYLVSRIRKGEQIRSMSYCLSNVRKNKIFNNIKKEIVDKKHKLNSTLTNISLSDDSFDKQKEEKEKFLRKKNYNNSIINALFNNKNLFFKFIVWIKNSFLKKHIFVKNESFKRNIFQNKKNILFAKKEEFNSIEEIHKKDNQVSSIDNNKKKQLLNKVKKNNNHQYSHVFDNNTKYTSLKKIDFQKNTIDFELNSLNFLKKNNFYIFSKYNFLYTKKYAKNKFKDFENIKSQNDMICYESFQKDLENNTSFKKKLLYNIIFNNCYPNNILVNINSTIFQIYKNSEFFKFFPIKISILMTPLNIFSLELILEPSSKKCSSFKENQVKKRLRINNYKKLNSSFIHKKNNFVKNSVLWPKKFTTEEIKINHLYKKNKKNTKSYFFETSFKYKTVTKNISKLKVKLTSKKNDYLISNQKKLFLNKTLKKENTKNKSSAPITKIFSDVFLSKNQKIMNSSIFLKKSNKKIKNSAGAHSATNFSTSPVKKSE.

An S1 motif domain is found at 39 to 119 (SNIYKGKITR…GTKGAALTTF (81 aa)). The Mg(2+) site is built by Asp303 and Asp346. Zn(2+)-binding residues include Cys404 and Cys407. Residues 404-407 (CPRC) form a required for zinc-mediated homotetramerization and catalytic activity region. The disordered stretch occupies residues 947-968 (IKNSAGAHSATNFSTSPVKKSE). A compositionally biased stretch (polar residues) spans 955 to 968 (SATNFSTSPVKKSE).

The protein belongs to the RNase E/G family. RNase E subfamily. Component of the RNA degradosome, which is a multiprotein complex involved in RNA processing and mRNA degradation. Within the RNA degradosome, RNase E assembles into a homotetramer formed by a dimer of dimers. Zn(2+) is required as a cofactor. The cofactor is Mg(2+).

The protein localises to the cytoplasm. The protein resides in the cell inner membrane. The catalysed reaction is Endonucleolytic cleavage of single-stranded RNA in A- and U-rich regions.. In terms of biological role, endoribonuclease that plays a central role in RNA processing and decay. Required for the maturation of 5S and 16S rRNAs and the majority of tRNAs. Also involved in the degradation of most mRNAs. The chain is Ribonuclease E from Buchnera aphidicola subsp. Schizaphis graminum (strain Sg).